The chain runs to 902 residues: Transcription factor FPSE_08121 (902 aa).

The tract at residues methionine 1–arginine 47 is disordered. The zn(2)-C6 fungal-type DNA-binding region spans cysteine 52–cysteine 81. 4 disordered regions span residues asparagine 92–glutamine 189, histidine 208–proline 234, alanine 258–threonine 277, and threonine 820–threonine 839. The segment covering threonine 120–threonine 137 has biased composition (low complexity). Acidic residues predominate over residues glutamate 168–glutamate 177. 4 stretches are compositionally biased toward polar residues: residues asparagine 178–alanine 187, glycine 220–proline 234, proline 262–threonine 277, and glycine 826–threonine 839.

The protein localises to the nucleus. Its function is as follows. Transcription factor; part of the Fusarium detoxification of benzoxazolinone cluster involved in the degradation of benzoxazolinones produced by the host plant. Maize, wheat, and rye produce the 2 benzoxazinone phytoanticipins 2,4-dihy-droxy-7-methoxy-1,4-benzoxazin-3-one (DIMBOA) and 2,4-dihydroxy-1,4-benzoxazin-3-one (DIBOA) that, due to their inherent instability once released, spontaneously degrade to the more stable corresponding benzoxazolinones, 6-methoxy-2-benzoxazolinone (MBOA) and 2-benzoxazolinone (BOA), respectively. FPSE_08121 positively regulates the expression of the FBD cluster gene FPSE_08120 in response to 2-aminophenol (2-AP) treatment and contributes quantitatively to benzoxazolinone tolerance. The polypeptide is Transcription factor FPSE_08121 (Fusarium pseudograminearum (strain CS3096) (Wheat and barley crown-rot fungus)).